A 113-amino-acid polypeptide reads, in one-letter code: N(2)-fixation sustaining protein CowN (113 aa).

Belongs to the CowN family.

Functionally, is required to sustain N(2)-dependent growth in the presence of low levels of carbon monoxide (CO). Probably acts by protecting the N(2) fixation ability of the nitrogenase complex, which is inactivated in the presence of CO. In Azoarcus sp. (strain BH72), this protein is N(2)-fixation sustaining protein CowN.